Consider the following 473-residue polypeptide: Adenosylhomocysteinase (473 aa).

Thr-60, Asp-135, and Glu-197 together coordinate substrate. Residue 198-200 (TTT) participates in NAD(+) binding. Substrate is bound by residues Lys-227 and Asp-231. NAD(+) contacts are provided by residues Asn-232, 261-266 (GFGDVG), Glu-284, Asn-319, 340-342 (IGH), and Asn-385.

It belongs to the adenosylhomocysteinase family. NAD(+) serves as cofactor.

The protein resides in the cytoplasm. The enzyme catalyses S-adenosyl-L-homocysteine + H2O = L-homocysteine + adenosine. It functions in the pathway amino-acid biosynthesis; L-homocysteine biosynthesis; L-homocysteine from S-adenosyl-L-homocysteine: step 1/1. May play a key role in the regulation of the intracellular concentration of adenosylhomocysteine. In Bradyrhizobium sp. (strain BTAi1 / ATCC BAA-1182), this protein is Adenosylhomocysteinase.